Here is a 104-residue protein sequence, read N- to C-terminus: uncharacterized protein (104 aa).

The protein resides in the mitochondrion. This is an uncharacterized protein from Claviceps purpurea (Ergot fungus).